Consider the following 359-residue polypeptide: Peptide chain release factor 1 (359 aa).

Glutamine 235 carries the N5-methylglutamine modification.

It belongs to the prokaryotic/mitochondrial release factor family. Methylated by PrmC. Methylation increases the termination efficiency of RF1.

It localises to the cytoplasm. In terms of biological role, peptide chain release factor 1 directs the termination of translation in response to the peptide chain termination codons UAG and UAA. The chain is Peptide chain release factor 1 from Nitrosomonas eutropha (strain DSM 101675 / C91 / Nm57).